Consider the following 34-residue polypeptide: Calcitonin-like peptide 1 (34 aa).

An intrachain disulfide couples Cys-2 to Cys-7. Proline amide is present on Pro-34.

The polypeptide is Calcitonin-like peptide 1 (Odorrana schmackeri (Schmacker's frog)).